We begin with the raw amino-acid sequence, 841 residues long: Probable outer membrane protein pmp2 (841 aa).

The first 24 residues, 1-24 (MKIPLRFLLISLVPTLSMSNLLGA), serve as a signal peptide directing secretion. An Autotransporter domain is found at 537–841 (GAPYEKRFWV…NVDAGSKIKF (305 aa)).

The protein belongs to the PMP outer membrane protein family.

It localises to the secreted. The protein localises to the cell wall. Its subcellular location is the cell outer membrane. The protein is Probable outer membrane protein pmp2 (pmp2) of Chlamydia pneumoniae (Chlamydophila pneumoniae).